A 94-amino-acid chain; its full sequence is Protein translocase subunit SecE (94 aa).

Positions 1 to 32 (MTDAVGSIDTPDAQDEVPESKKTRKGGKRAKK) are disordered. Basic residues predominate over residues 22–32 (KTRKGGKRAKK). A helical membrane pass occupies residues 59–81 (QLTSYTTVVIFFVAIMIRLVTVI).

The protein belongs to the SecE/SEC61-gamma family. Component of the Sec protein translocase complex. Heterotrimer consisting of SecY, SecE and SecG subunits. The heterotrimers can form oligomers, although 1 heterotrimer is thought to be able to translocate proteins. Interacts with the ribosome. Interacts with SecDF, and other proteins may be involved. Interacts with SecA.

Its subcellular location is the cell membrane. Functionally, essential subunit of the Sec protein translocation channel SecYEG. Clamps together the 2 halves of SecY. May contact the channel plug during translocation. In Streptomyces galbus, this protein is Protein translocase subunit SecE.